The sequence spans 689 residues: DNA ligase (689 aa).

NAD(+) is bound by residues 40-44 (DSEYD), 89-90 (SL), and Glu121. Lys123 acts as the N6-AMP-lysine intermediate in catalysis. Positions 144, 179, 295, and 319 each coordinate NAD(+). Residues Cys413, Cys416, Cys431, and Cys437 each contribute to the Zn(2+) site. One can recognise a BRCT domain in the interval 610–689 (REQSSLTDKI…EEWLTLIKNV (80 aa)).

Belongs to the NAD-dependent DNA ligase family. LigA subfamily. Mg(2+) serves as cofactor. It depends on Mn(2+) as a cofactor.

It catalyses the reaction NAD(+) + (deoxyribonucleotide)n-3'-hydroxyl + 5'-phospho-(deoxyribonucleotide)m = (deoxyribonucleotide)n+m + AMP + beta-nicotinamide D-nucleotide.. In terms of biological role, DNA ligase that catalyzes the formation of phosphodiester linkages between 5'-phosphoryl and 3'-hydroxyl groups in double-stranded DNA using NAD as a coenzyme and as the energy source for the reaction. It is essential for DNA replication and repair of damaged DNA. The sequence is that of DNA ligase from Rickettsia massiliae (strain Mtu5).